We begin with the raw amino-acid sequence, 424 residues long: N-succinylarginine dihydrolase (424 aa).

Substrate contacts are provided by residues 19–28 (AGLSPGNIAS), asparagine 110, and 137–138 (HR). Glutamate 174 is a catalytic residue. Arginine 207 contributes to the substrate binding site. Residue histidine 240 is part of the active site. Positions 242 and 349 each coordinate substrate. Cysteine 355 acts as the Nucleophile in catalysis.

It belongs to the succinylarginine dihydrolase family. In terms of assembly, homodimer.

The enzyme catalyses N(2)-succinyl-L-arginine + 2 H2O + 2 H(+) = N(2)-succinyl-L-ornithine + 2 NH4(+) + CO2. Its pathway is amino-acid degradation; L-arginine degradation via AST pathway; L-glutamate and succinate from L-arginine: step 2/5. Catalyzes the hydrolysis of N(2)-succinylarginine into N(2)-succinylornithine, ammonia and CO(2). This Rhizorhabdus wittichii (strain DSM 6014 / CCUG 31198 / JCM 15750 / NBRC 105917 / EY 4224 / RW1) (Sphingomonas wittichii) protein is N-succinylarginine dihydrolase.